Here is a 131-residue protein sequence, read N- to C-terminus: Glycine cleavage system H protein (131 aa).

Positions 24–106 constitute a Lipoyl-binding domain; the sequence is IATIGISAFA…YGEGWLLKLR (83 aa). Position 65 is an N6-lipoyllysine (Lys65).

This sequence belongs to the GcvH family. As to quaternary structure, the glycine cleavage system is composed of four proteins: P, T, L and H. It depends on (R)-lipoate as a cofactor.

Functionally, the glycine cleavage system catalyzes the degradation of glycine. The H protein shuttles the methylamine group of glycine from the P protein to the T protein. This is Glycine cleavage system H protein from Gloeothece citriformis (strain PCC 7424) (Cyanothece sp. (strain PCC 7424)).